The following is a 178-amino-acid chain: SCAN domain-containing protein 1 (178 aa).

Positions Met1 to Arg107 are disordered. Over residues Ala9–Ser18 the composition is skewed to low complexity. The segment covering Gly36 to Ala54 has biased composition (polar residues). Positions Arg107–Gly178 constitute an SCAN box domain.

Interacts with ZNF202.

Its subcellular location is the nucleus. Its function is as follows. May regulate transcriptional activity. The polypeptide is SCAN domain-containing protein 1 (SCAND1) (Bos taurus (Bovine)).